Reading from the N-terminus, the 144-residue chain is Cell division protein SepF (144 aa).

It belongs to the SepF family. Homodimer. Interacts with FtsZ.

It localises to the cytoplasm. Functionally, cell division protein that is part of the divisome complex and is recruited early to the Z-ring. Probably stimulates Z-ring formation, perhaps through the cross-linking of FtsZ protofilaments. Its function overlaps with FtsA. This is Cell division protein SepF from Geobacillus sp. (strain WCH70).